The chain runs to 875 residues: Alanine--tRNA ligase (875 aa).

Zn(2+)-binding residues include His564, His568, Cys666, and His670.

Belongs to the class-II aminoacyl-tRNA synthetase family. In terms of assembly, homotetramer. Requires Zn(2+) as cofactor.

The protein localises to the cytoplasm. It carries out the reaction tRNA(Ala) + L-alanine + ATP = L-alanyl-tRNA(Ala) + AMP + diphosphate. Its function is as follows. Catalyzes the attachment of alanine to tRNA(Ala) in a two-step reaction: alanine is first activated by ATP to form Ala-AMP and then transferred to the acceptor end of tRNA(Ala). Also edits incorrectly charged Ser-tRNA(Ala) and Gly-tRNA(Ala) via its editing domain. This is Alanine--tRNA ligase from Sodalis glossinidius (strain morsitans).